We begin with the raw amino-acid sequence, 318 residues long: Porphobilinogen deaminase (318 aa).

The residue at position 241 (C241) is an S-(dipyrrolylmethanemethyl)cysteine.

It belongs to the HMBS family. As to quaternary structure, monomer. Requires dipyrromethane as cofactor.

It catalyses the reaction 4 porphobilinogen + H2O = hydroxymethylbilane + 4 NH4(+). It functions in the pathway porphyrin-containing compound metabolism; protoporphyrin-IX biosynthesis; coproporphyrinogen-III from 5-aminolevulinate: step 2/4. Tetrapolymerization of the monopyrrole PBG into the hydroxymethylbilane pre-uroporphyrinogen in several discrete steps. The chain is Porphobilinogen deaminase from Geobacter sulfurreducens (strain ATCC 51573 / DSM 12127 / PCA).